The sequence spans 340 residues: tRNA N6-adenosine threonylcarbamoyltransferase (340 aa).

Residues histidine 115 and histidine 119 each contribute to the Fe cation site. Residues isoleucine 137 to glycine 141, aspartate 170, glycine 183, aspartate 187, and asparagine 276 contribute to the substrate site. Aspartate 304 lines the Fe cation pocket.

The protein belongs to the KAE1 / TsaD family. It depends on Fe(2+) as a cofactor.

Its subcellular location is the cytoplasm. It catalyses the reaction L-threonylcarbamoyladenylate + adenosine(37) in tRNA = N(6)-L-threonylcarbamoyladenosine(37) in tRNA + AMP + H(+). In terms of biological role, required for the formation of a threonylcarbamoyl group on adenosine at position 37 (t(6)A37) in tRNAs that read codons beginning with adenine. Is involved in the transfer of the threonylcarbamoyl moiety of threonylcarbamoyl-AMP (TC-AMP) to the N6 group of A37, together with TsaE and TsaB. TsaD likely plays a direct catalytic role in this reaction. The protein is tRNA N6-adenosine threonylcarbamoyltransferase of Staphylococcus epidermidis (strain ATCC 35984 / DSM 28319 / BCRC 17069 / CCUG 31568 / BM 3577 / RP62A).